Here is a 228-residue protein sequence, read N- to C-terminus: MKVVVSIGGSVLAPDLDADRVADYADAIQSLDAQGHTLGTVVGGGPTARDYIGSARDLGANEIELDQLGIAVTRLNGRLLIAALDDRAAPTPAESYDEGREAIRRGDIPVLGGIVAAQTTDAVAAAFAEYVGADLLVYATSVPGVYNADPNEDDDATRFDELGADELVDVIADIEMDAGSSAPVDLLAAKIIQRSGIRTMVLDGTDPERVVRAVEDGEFDGSEILPEA.

ATP is bound at residue 9–10 (GS). UMP is bound at residue glycine 44. Residues glycine 45 and arginine 49 each coordinate ATP. UMP-binding positions include aspartate 66 and 114–120 (IVAAQTT). ATP is bound by residues threonine 140, tyrosine 146, and aspartate 149.

The protein belongs to the UMP kinase family. Homohexamer.

It localises to the cytoplasm. The catalysed reaction is UMP + ATP = UDP + ADP. The protein operates within pyrimidine metabolism; CTP biosynthesis via de novo pathway; UDP from UMP (UMPK route): step 1/1. Its activity is regulated as follows. Inhibited by UTP. Its function is as follows. Catalyzes the reversible phosphorylation of UMP to UDP. The polypeptide is Uridylate kinase (Haloarcula marismortui (strain ATCC 43049 / DSM 3752 / JCM 8966 / VKM B-1809) (Halobacterium marismortui)).